The chain runs to 102 residues: Small ribosomal subunit protein uS10 (102 aa).

The protein belongs to the universal ribosomal protein uS10 family. Part of the 30S ribosomal subunit.

Its function is as follows. Involved in the binding of tRNA to the ribosomes. The protein is Small ribosomal subunit protein uS10 of Micrococcus luteus (strain ATCC 4698 / DSM 20030 / JCM 1464 / CCM 169 / CCUG 5858 / IAM 1056 / NBRC 3333 / NCIMB 9278 / NCTC 2665 / VKM Ac-2230) (Micrococcus lysodeikticus).